Reading from the N-terminus, the 455-residue chain is NADH-quinone oxidoreductase subunit N (455 aa).

Transmembrane regions (helical) follow at residues 25 to 45 (AIVP…ISEY), 61 to 81 (FSVA…ALSH), 99 to 119 (VFLL…MFFL), 149 to 169 (FLMG…IYGA), 193 to 213 (IGIV…PFHF), 257 to 277 (IQII…IMAL), 285 to 305 (MFAF…LLTS), 312 to 332 (LYYA…VMYV), 355 to 375 (AGIL…SGFF), 391 to 411 (IVVF…FKII), and 432 to 452 (IVAV…NVVL).

Belongs to the complex I subunit 2 family. NDH-1 is composed of 14 different subunits. Subunits NuoA, H, J, K, L, M, N constitute the membrane sector of the complex.

It is found in the cell inner membrane. The catalysed reaction is a quinone + NADH + 5 H(+)(in) = a quinol + NAD(+) + 4 H(+)(out). NDH-1 shuttles electrons from NADH, via FMN and iron-sulfur (Fe-S) centers, to quinones in the respiratory chain. The immediate electron acceptor for the enzyme in this species is believed to be a menaquinone. Couples the redox reaction to proton translocation (for every two electrons transferred, four hydrogen ions are translocated across the cytoplasmic membrane), and thus conserves the redox energy in a proton gradient. The polypeptide is NADH-quinone oxidoreductase subunit N (Flavobacterium psychrophilum (strain ATCC 49511 / DSM 21280 / CIP 103535 / JIP02/86)).